Here is a 462-residue protein sequence, read N- to C-terminus: uncharacterized protein (462 aa).

It belongs to the IIV-6 329R family.

This is an uncharacterized protein from Aedes vexans (Inland floodwater mosquito).